Consider the following 275-residue polypeptide: Ribosomal RNA small subunit methyltransferase A (275 aa).

S-adenosyl-L-methionine contacts are provided by Asn-19, Leu-21, Gly-46, Glu-71, Asp-94, and Asn-117.

This sequence belongs to the class I-like SAM-binding methyltransferase superfamily. rRNA adenine N(6)-methyltransferase family. RsmA subfamily.

The protein localises to the cytoplasm. It catalyses the reaction adenosine(1518)/adenosine(1519) in 16S rRNA + 4 S-adenosyl-L-methionine = N(6)-dimethyladenosine(1518)/N(6)-dimethyladenosine(1519) in 16S rRNA + 4 S-adenosyl-L-homocysteine + 4 H(+). Functionally, specifically dimethylates two adjacent adenosines (A1518 and A1519) in the loop of a conserved hairpin near the 3'-end of 16S rRNA in the 30S particle. May play a critical role in biogenesis of 30S subunits. The polypeptide is Ribosomal RNA small subunit methyltransferase A (Burkholderia thailandensis (strain ATCC 700388 / DSM 13276 / CCUG 48851 / CIP 106301 / E264)).